The primary structure comprises 664 residues: Transmembrane protein 201 (664 aa).

Methionine 1 is modified (N-acetylmethionine). At 1–214 (MEGVSALLAS…SSSAVKAPFQ (214 aa)) the chain is on the nuclear side. The helical transmembrane segment at 215–235 (VILLRALAFLACAFLLFTTLY) threads the bilayer. Residues 236 to 297 (GPSEPFTPGA…EAWAFGQSHQ (62 aa)) lie on the Perinuclear space side of the membrane. Positions 245–261 (AALPPALPPGGNSSAAS) are enriched in low complexity. Positions 245–264 (AALPPALPPGGNSSAASDNT) are disordered. The chain crosses the membrane as a helical span at residues 298–318 (TSIVAVGLLTCLLAMLLAGRI). Residues 319–322 (RLRR) are Nuclear-facing. Residues 323-343 (IDAFSTCLWALLLGLHLAEHY) traverse the membrane as a helical segment. Over 344 to 356 (LQAASPGWLDTLK) the chain is Perinuclear space. The chain crosses the membrane as a helical span at residues 357–374 (FSTTSLCCLVGFTAAVAT). Residues 375–642 (RKSTGPRRFR…ARVSPSLVRG (268 aa)) lie on the Nuclear side of the membrane. Phosphoserine occurs at positions 441, 444, 450, 454, 466, 477, and 480. The disordered stretch occupies residues 502 to 522 (PLPSPAPSVASSVASSSGSLR). The span at 508–520 (PSVASSVASSSGS) shows a compositional bias: low complexity. Serine 529 bears the Phosphoserine mark. Residues 544–629 (SSPGEAPNTP…TTKGCSEETT (86 aa)) are disordered. 2 stretches are compositionally biased toward basic and acidic residues: residues 578 to 587 (HTRDTKHTME) and 595 to 608 (DSARSSHSIKKEDE). Residues 610–628 (SQSSTCVVDTTTKGCSEET) are compositionally biased toward polar residues. Residues 643-663 (LLAVSLAVNALFTSAYLYQSL) form a helical membrane-spanning segment. Residue arginine 664 is a topological domain, perinuclear space.

It belongs to the TMEM201 family. In terms of assembly, isoform 2 interacts with EMD. Isoform 3 interacts with SUN2 and LMNA. May bind to Ran GTPase; has a greater affinity for Ran-GTP over Ran-GDP.

Its subcellular location is the nucleus inner membrane. Its function is as follows. Critical regulator of angiogenesis and endothelial cell (EC) migration. Promotes the migration of endothelial cells, which is essential for angiogenesis. Interacts with the linker of nucleoskeleton and cytoskeleton (LINC) complex, which plays a vital role in connecting the cell's cytoskeleton to the nuclear envelope. This interaction is essential for maintaining cellular structure and facilitating the movement of endothelial cells, which is critical for proper vascular development. Involved in nuclear movement during fibroblast polarization and migration. May recruit Ran GTPase to the nuclear periphery. May define a distinct membrane domain in the vicinity of the mitotic spindle. Involved in the organization of the nuclear envelope implicating EMD, SUN1 and A-type lamina. In terms of biological role, proposed to be involved in actin-dependent nuclear movement; via SUN2 associates with transmembrane actin-associated nuclear (TAN) lines which are bound to F-actin cables and couple the nucleus to retrograde actin flow. The chain is Transmembrane protein 201 (Tmem201) from Mus musculus (Mouse).